Here is a 130-residue protein sequence, read N- to C-terminus: Small ribosomal subunit protein uS11 (130 aa).

It belongs to the universal ribosomal protein uS11 family. In terms of assembly, part of the 30S ribosomal subunit. Interacts with proteins S7 and S18. Binds to IF-3.

Its function is as follows. Located on the platform of the 30S subunit, it bridges several disparate RNA helices of the 16S rRNA. Forms part of the Shine-Dalgarno cleft in the 70S ribosome. The sequence is that of Small ribosomal subunit protein uS11 from Shewanella amazonensis (strain ATCC BAA-1098 / SB2B).